The primary structure comprises 826 residues: Ubiquitin carboxyl-terminal hydrolase 16 (826 aa).

The UBP-type zinc finger occupies 22–142 (PVCRHIRKGL…QVVDYVRKQA (121 aa)). Cysteine 24, histidine 26, cysteine 48, cysteine 51, cysteine 74, cysteine 77, cysteine 82, histidine 90, histidine 94, histidine 103, cysteine 116, and cysteine 119 together coordinate Zn(2+). A Glycyl lysine isopeptide (Lys-Gly) (interchain with G-Cter in SUMO2) cross-link involves residue lysine 140. Residues 144–189 (NTTPESAEDNGNIELENKKLEKESKNEQEREKKENMARENPSMNST) are disordered. Residues 158 to 180 (LENKKLEKESKNEQEREKKENMA) show a composition bias toward basic and acidic residues. A Phosphoserine modification is found at serine 188. Positions 195–825 (KGLSNLGNTC…QAYLLFYERI (631 aa)) constitute a USP domain. Residue cysteine 204 is the Nucleophile of the active site. A compositionally biased stretch (basic and acidic residues) spans 393-407 (SGKKSINDKNLKKTM). A disordered region spans residues 393–458 (SGKKSINDKN…QAKNQRRQQK (66 aa)). The segment covering 408–419 (EDEDKDSEEEKD) has biased composition (acidic residues). Residue serine 414 is modified to Phosphoserine. Positions 420-429 (NDSYLKERND) are enriched in basic and acidic residues. The span at 437 to 457 (HLQKKAKKQAKKQAKNQRRQQ) shows a compositional bias: basic residues. Phosphoserine occurs at positions 530 and 551. Histidine 760 (proton acceptor) is an active-site residue.

Belongs to the peptidase C19 family. USP16 subfamily. In terms of assembly, homotetramer. Associates with late pre-40S ribosomes. Interacts with CEP78; promoting deubiquitination of tektins. Phosphorylated at the onset of mitosis and dephosphorylated during the metaphase/anaphase transition. Phosphorylation by AURKB enhances the deubiquitinase activity.

Its subcellular location is the nucleus. It catalyses the reaction Thiol-dependent hydrolysis of ester, thioester, amide, peptide and isopeptide bonds formed by the C-terminal Gly of ubiquitin (a 76-residue protein attached to proteins as an intracellular targeting signal).. Functionally, specifically deubiquitinates 'Lys-120' of histone H2A (H2AK119Ub), a specific tag for epigenetic transcriptional repression, thereby acting as a coactivator. Deubiquitination of histone H2A is a prerequisite for subsequent phosphorylation at 'Ser-11' of histone H3 (H3S10ph), and is required for chromosome segregation when cells enter into mitosis. In resting B- and T-lymphocytes, phosphorylation by AURKB leads to enhance its activity, thereby maintaining transcription in resting lymphocytes. Regulates Hox gene expression via histone H2A deubiquitination. Prefers nucleosomal substrates. Does not deubiquitinate histone H2B. Also deubiquitinates non-histone proteins, such as ribosomal protein RPS27A: deubiquitination of monoubiquitinated RPS27A promotes maturation of the 40S ribosomal subunit. Also mediates deubiquitination of tektin proteins (TEKT1, TEKT2, TEK3, TEKT4 and TEKT5), promoting their stability. The protein is Ubiquitin carboxyl-terminal hydrolase 16 of Bos taurus (Bovine).